A 1230-amino-acid chain; its full sequence is Ubiquitin carboxyl-terminal hydrolase 15 (1230 aa).

One can recognise an MATH domain in the interval 39-179 (EDSFTWNIPD…EGTLNITAYV (141 aa)). Residues 205 to 536 (VGFRNQGATC…SAYMLVYIRQ (332 aa)) form the USP domain. C214 acts as the Nucleophile in catalysis. H465 (proton acceptor) is an active-site residue.

This sequence belongs to the peptidase C19 family. In terms of assembly, interacts with PEX6; promoting association with the PEX1-PEX6 ATPase complex.

The protein resides in the cytoplasm. Its subcellular location is the cytosol. It localises to the peroxisome. It catalyses the reaction Thiol-dependent hydrolysis of ester, thioester, amide, peptide and isopeptide bonds formed by the C-terminal Gly of ubiquitin (a 76-residue protein attached to proteins as an intracellular targeting signal).. Its function is as follows. Deubiquitinase involved in peroxisome import by mediating deubiquitination of the peroxisomal import receptor PEX5. Catalyzes deubiquitination of both monoubiquitiated and polyubiquitinated forms of PEX5 following its retrotranslocation into the cytosol, resetting PEX5 for a subsequent import cycle. This is Ubiquitin carboxyl-terminal hydrolase 15 from Saccharomyces cerevisiae (strain ATCC 204508 / S288c) (Baker's yeast).